The following is a 347-amino-acid chain: MLHTTQLYQHVPETRWPIVYSPRYNITFMGLEKLHPFDAGKWGKVINFLKEEKLLSDSMLVEAREASEEDLLVVHTRRYLNELKWSFAVATITEIPPVIFLPNFLVQRKVLRPLRTQTGGTIMAGKLAVERGWAINVGGGFHHCSSDRGGGFCAYADITLAIKFLFERVEGISRATIIDLDAHQGNGHERDFMDDKRVYIMDVYNRHIYPGDRFAKQAIRRKVELEWGTEDDEYLDKVERNIKKSLQEHLPDVVVYNAGTDILEGDRLGGLSISPAGIVKRDELVFRMVRGRRVPILMVTSGGYQKRTARIIADSILNLFGLGLIGPESPSVSAQNSDTPLLPPAVP.

Residues Thr-14–Gly-326 are histone deacetylase. His-143 is a catalytic residue.

Belongs to the histone deacetylase family. Interacts with HDAC6. As to expression, weakly expressed in most tissues. Strongly expressed in brain, heart, skeletal muscle, kidney and testis.

The protein localises to the nucleus. The enzyme catalyses N(6)-acetyl-L-lysyl-[histone] + H2O = L-lysyl-[histone] + acetate. Responsible for the deacetylation of lysine residues on the N-terminal part of the core histones (H2A, H2B, H3 and H4). Histone deacetylation gives a tag for epigenetic repression and plays an important role in transcriptional regulation, cell cycle progression and developmental events. Histone deacetylases act via the formation of large multiprotein complexes. This Homo sapiens (Human) protein is Histone deacetylase 11 (HDAC11).